The chain runs to 95 residues: PqqA binding protein (95 aa).

This sequence belongs to the PqqD family. In terms of assembly, monomer. Interacts with PqqE.

Its pathway is cofactor biosynthesis; pyrroloquinoline quinone biosynthesis. Functionally, functions as a PqqA binding protein and presents PqqA to PqqE, in the pyrroloquinoline quinone (PQQ) biosynthetic pathway. The polypeptide is PqqA binding protein (Rahnella aquatilis).